The sequence spans 364 residues: MSILNLVRTDLLNSQNYVPGGESARYRSHANELPWSPVTMGEHNLNYYPNIGLQIELQNQLAKRYQIYSDQIILTRGSDDGIDLTTRFFLTAGKDAFMQFPPTFPMYAFYVRLQQAELIECPLDRRTNFRLTLDQIENSWKPNCKVIMFCSPNNPTGNLVDLNLIAKTCELYANQSIIVVDEAYIEFANAPSATSLIGEFENLIVLRTLSKAFGLAGLRLGCIIAQSPIIQAFNKIIAPYSIATPSMELAKRALNNSDWFTKTIEQIKSSRAWVIKKFADNPIIEKIYPTETNFILIQTRFSKQLTTWLARYGIAVRDFPSSSLLHDHLRITVGNDEQNQLLINALSSFNADVAGLNYEKDFIY.

Residue K211 is modified to N6-(pyridoxal phosphate)lysine.

Belongs to the class-II pyridoxal-phosphate-dependent aminotransferase family. Histidinol-phosphate aminotransferase subfamily. Homodimer. Requires pyridoxal 5'-phosphate as cofactor.

The catalysed reaction is L-histidinol phosphate + 2-oxoglutarate = 3-(imidazol-4-yl)-2-oxopropyl phosphate + L-glutamate. The protein operates within amino-acid biosynthesis; L-histidine biosynthesis; L-histidine from 5-phospho-alpha-D-ribose 1-diphosphate: step 7/9. The sequence is that of Histidinol-phosphate aminotransferase 1 from Legionella pneumophila (strain Paris).